The chain runs to 205 residues: Ribosome maturation factor RimP (205 aa).

Belongs to the RimP family.

It is found in the cytoplasm. Functionally, required for maturation of 30S ribosomal subunits. In Sinorhizobium medicae (strain WSM419) (Ensifer medicae), this protein is Ribosome maturation factor RimP.